The following is a 125-amino-acid chain: Cystatin-like cysteine protease inhibitor EPIC2B (125 aa).

Positions 1-21 (MSFLRPTLALLAVTALVTTSG) are cleaved as a signal peptide. Residue Asn45 is glycosylated (N-linked (GlcNAc...) asparagine). A Secondary area of contact motif is present at residues 68 to 72 (QVVSG).

This sequence belongs to the cystatin family. As to quaternary structure, interacts with the host papain-like cysteine protease PIP1. Interacts with the host papain-like cysteine protease RCR3. Interacts with the host papain-like cysteine protease C14.

The protein localises to the secreted. Its function is as follows. Secreted effector that interacts with and inhibits the pathogenesis-related papain-like cysteine proteases C14, PIP1 and RCR3 of host plants. Inhibition of host proteases by a pathogen extracellular protease inhibitor forms a specific type of defense-counterdefense mechanism between plants and microbial pathogens. The sequence is that of Cystatin-like cysteine protease inhibitor EPIC2B from Phytophthora infestans (Potato late blight agent).